We begin with the raw amino-acid sequence, 57 residues long: Sperm protamine P1-type (57 aa).

The interval 1–57 (MARYRHNRSRSRSRHRRRRRGHRGGRYRRRRRRGRYGHRRHHRGHSRRRRKRRRSRH) is disordered.

It belongs to the protamine P1 family. In terms of tissue distribution, testis.

The protein localises to the nucleus. It is found in the chromosome. In terms of biological role, protamines substitute for histones in the chromatin of sperm during the haploid phase of spermatogenesis. They compact sperm DNA into a highly condensed, stable and inactive complex. The sequence is that of Sperm protamine P1-type from Alligator mississippiensis (American alligator).